Reading from the N-terminus, the 298-residue chain is Ribosomal protein L11 methyltransferase (298 aa).

4 residues coordinate S-adenosyl-L-methionine: Thr139, Gly163, Asp185, and Asn232.

The protein belongs to the methyltransferase superfamily. PrmA family.

The protein localises to the cytoplasm. The enzyme catalyses L-lysyl-[protein] + 3 S-adenosyl-L-methionine = N(6),N(6),N(6)-trimethyl-L-lysyl-[protein] + 3 S-adenosyl-L-homocysteine + 3 H(+). Its function is as follows. Methylates ribosomal protein L11. This is Ribosomal protein L11 methyltransferase from Gloeothece citriformis (strain PCC 7424) (Cyanothece sp. (strain PCC 7424)).